The primary structure comprises 309 residues: 2-phosphoglycerate kinase (309 aa).

One can recognise an ATP-cone domain in the interval 5-92 (NDIIVRGKSY…LWRMVLGRRP (88 aa)).

Belongs to the 2-phosphoglycerate kinase family. A divalent metal cation serves as cofactor.

The enzyme catalyses (2R)-2-phosphoglycerate + ATP = (2R)-2,3-bisphosphoglycerate + ADP + H(+). It participates in thermoadapter biosynthesis; cyclic 2,3-diphosphoglycerate biosynthesis; cyclic 2,3-diphosphoglycerate from 2-phospho-D-glycerate: step 1/2. Functionally, catalyzes the phosphorylation of 2-phosphoglycerate to 2,3-diphosphoglycerate. Involved in the biosynthesis of cyclic 2,3-bisphosphoglycerate, a thermoprotectant. This is 2-phosphoglycerate kinase from Methanocaldococcus jannaschii (strain ATCC 43067 / DSM 2661 / JAL-1 / JCM 10045 / NBRC 100440) (Methanococcus jannaschii).